Here is a 279-residue protein sequence, read N- to C-terminus: Lacto-N-neotetraose biosynthesis glycosyltransferase LgtB (279 aa).

This sequence belongs to the glycosyltransferase 25 family.

It participates in glycan metabolism; lacto-N-neotetraose biosynthesis. The protein operates within bacterial outer membrane biogenesis; lipooligosaccharide biosynthesis. Functionally, adds the second galactose to the lacto-N-tetraose chain in lipooligosaccharide (LOS). This is Lacto-N-neotetraose biosynthesis glycosyltransferase LgtB (lgtB) from Neisseria gonorrhoeae.